A 203-amino-acid chain; its full sequence is Holliday junction branch migration complex subunit RuvA (203 aa).

A domain I region spans residues 1 to 63 (MIGKLSGKVD…EEHMHLYGFL (63 aa)). Residues 64-142 (TLEEKIFFNL…KISSGSAIIK (79 aa)) are domain II. A flexible linker region spans residues 143-149 (ESLNIKN). The segment at 150-203 (ITPVASNEVIKALVNLGFSRFEAQNAVQGIITQNPEISIDELIKTALKNRNSNF) is domain III.

The protein belongs to the RuvA family. As to quaternary structure, homotetramer. Forms an RuvA(8)-RuvB(12)-Holliday junction (HJ) complex. HJ DNA is sandwiched between 2 RuvA tetramers; dsDNA enters through RuvA and exits via RuvB. An RuvB hexamer assembles on each DNA strand where it exits the tetramer. Each RuvB hexamer is contacted by two RuvA subunits (via domain III) on 2 adjacent RuvB subunits; this complex drives branch migration. In the full resolvosome a probable DNA-RuvA(4)-RuvB(12)-RuvC(2) complex forms which resolves the HJ.

It localises to the cytoplasm. In terms of biological role, the RuvA-RuvB-RuvC complex processes Holliday junction (HJ) DNA during genetic recombination and DNA repair, while the RuvA-RuvB complex plays an important role in the rescue of blocked DNA replication forks via replication fork reversal (RFR). RuvA specifically binds to HJ cruciform DNA, conferring on it an open structure. The RuvB hexamer acts as an ATP-dependent pump, pulling dsDNA into and through the RuvAB complex. HJ branch migration allows RuvC to scan DNA until it finds its consensus sequence, where it cleaves and resolves the cruciform DNA. The sequence is that of Holliday junction branch migration complex subunit RuvA from Rickettsia peacockii (strain Rustic).